The following is a 311-amino-acid chain: Putative methylthioribose-1-phosphate isomerase (311 aa).

Residues 46-48 (RGA), Arg-80, and Gln-174 each bind substrate. Asp-215 (proton donor) is an active-site residue. 224-225 (NK) contacts substrate.

The protein belongs to the eIF-2B alpha/beta/delta subunits family. MtnA subfamily.

It catalyses the reaction 5-(methylsulfanyl)-alpha-D-ribose 1-phosphate = 5-(methylsulfanyl)-D-ribulose 1-phosphate. Functionally, catalyzes the interconversion of methylthioribose-1-phosphate (MTR-1-P) into methylthioribulose-1-phosphate (MTRu-1-P). The chain is Putative methylthioribose-1-phosphate isomerase from Methanothermobacter thermautotrophicus (strain ATCC 29096 / DSM 1053 / JCM 10044 / NBRC 100330 / Delta H) (Methanobacterium thermoautotrophicum).